Here is a 407-residue protein sequence, read N- to C-terminus: Peptidase T (407 aa).

Histidine 82 contacts Zn(2+). Aspartate 84 is an active-site residue. Aspartate 143 provides a ligand contact to Zn(2+). Glutamate 177 (proton acceptor) is an active-site residue. The Zn(2+) site is built by glutamate 178, aspartate 200, and histidine 382.

This sequence belongs to the peptidase M20B family. It depends on Zn(2+) as a cofactor.

It is found in the cytoplasm. It catalyses the reaction Release of the N-terminal residue from a tripeptide.. Functionally, cleaves the N-terminal amino acid of tripeptides. The chain is Peptidase T from Streptococcus pyogenes serotype M18 (strain MGAS8232).